The following is a 127-amino-acid chain: Large ribosomal subunit protein bL21 (127 aa).

The protein belongs to the bacterial ribosomal protein bL21 family. Part of the 50S ribosomal subunit. Contacts protein L20.

Functionally, this protein binds to 23S rRNA in the presence of protein L20. The protein is Large ribosomal subunit protein bL21 of Synechococcus sp. (strain ATCC 27144 / PCC 6301 / SAUG 1402/1) (Anacystis nidulans).